Consider the following 237-residue polypeptide: Ribonuclease PH (237 aa).

Residues Arg-86 and 124–126 (GTR) contribute to the phosphate site.

This sequence belongs to the RNase PH family. As to quaternary structure, homohexameric ring arranged as a trimer of dimers.

The catalysed reaction is tRNA(n+1) + phosphate = tRNA(n) + a ribonucleoside 5'-diphosphate. Its function is as follows. Phosphorolytic 3'-5' exoribonuclease that plays an important role in tRNA 3'-end maturation. Removes nucleotide residues following the 3'-CCA terminus of tRNAs; can also add nucleotides to the ends of RNA molecules by using nucleoside diphosphates as substrates, but this may not be physiologically important. Probably plays a role in initiation of 16S rRNA degradation (leading to ribosome degradation) during starvation. This Shewanella sediminis (strain HAW-EB3) protein is Ribonuclease PH.